Reading from the N-terminus, the 341-residue chain is Fructose-1,6-bisphosphatase, cytosolic (341 aa).

Mg(2+) contacts are provided by glutamate 71, glutamate 100, aspartate 121, leucine 123, and aspartate 124. Residues 124 to 127, asparagine 215, tyrosine 247, tyrosine 267, and lysine 277 each bind substrate; that span reads DGSS. Glutamate 283 contacts Mg(2+).

This sequence belongs to the FBPase class 1 family. Requires Mg(2+) as cofactor.

The protein localises to the cytoplasm. It localises to the nucleus. It carries out the reaction beta-D-fructose 1,6-bisphosphate + H2O = beta-D-fructose 6-phosphate + phosphate. Catalyzes the first irreversible reaction from fructose-1,6-bisphosphate to fructose-6-phosphate and inorganic phosphate and plays an important regulatory role in sucrose biosynthesis and metabolism. Its activity is essential to regulate starch levels. Functions in fructose-mediated signaling independently of its catalytic activity in sugar metabolism. May act downstream of ABA2/GIN1, which is involved in abscisic acid (ABA) synthesis to regulate autotrophic transition and modulate early seedling establishment after seed germination. The chain is Fructose-1,6-bisphosphatase, cytosolic from Arabidopsis thaliana (Mouse-ear cress).